We begin with the raw amino-acid sequence, 151 residues long: Protein A151R (151 aa).

This sequence belongs to the asfivirus A151R family. Monomer. Homodimer. Interacts with protein B119L. Interacts with membrane protein E248R. Zn(2+) is required as a cofactor.

May participate in a redox cascade for the formation of disulfide bonds in viral proteins. The chain is Protein A151R from Ornithodoros (relapsing fever ticks).